Reading from the N-terminus, the 718-residue chain is MKLAKKWRDWYIESGKKYLFPLLLVCFAVIAYFLVCQMTKPESYNVKLFQVAEKTIRSPQTVEDTEKTKEERTKASDAVEDVYVYNRETGQNRVALIQSLFAYVNEVNAEAQEKDTKNKEKAKKENKPAPAPTSTEDKLKNLKDKLSSNVSEKITSNISDEVFTTLIEAKSKDFNVMEDVVTTEVEKSMENKIRDENLNSVKIRARDDIELSAIPAYYKNVSKALVSYAIVPNEVYDEEQTDARRKEAAQSVVPVKILQGQVIVQEGQIVDRETYRQLKMLHLLDQKMPVKQYAGFAIFIIALAAILFLYTKKQTQPKAKKMQTMLIFSSVYLVSLFMLFIILFLETQNIANIAFLFPAAFAPMILKILLNEKYAFLSVIFIAVTSLLTFQNDATSGITIFILLSGATSVVMLRDYSRRSAIMLSGFMVGLINMIYVLLLLLINNSTLLQVSTLMALGYAFLGGFGAFILGVGVIPLFETIFGLLTTSRLVELANPNHPLLKKILMKAPGTYHHSMMVANLAEACADKIGANSLLVRVGCFYHDIGKTLRPPYFVENQLQGINPHDRLTPEQSRDIILSHTKDGAEILKENHMPQPIIDIALQHHGTTLLKYFYFKAKETNPDVKEADYRYSGPKPQTKEIAIINISDSVEAAVRSSTEPTMAKITEIIDGIIKDRFLDGQFTECDITIQEIKIIRDTLIATLNGIYHQRIQYPDDKD.

The Cytoplasmic segment spans residues 1 to 17; sequence MKLAKKWRDWYIESGKK. The chain crosses the membrane as a helical span at residues 18–38; sequence YLFPLLLVCFAVIAYFLVCQM. Topologically, residues 39–289 are extracellular; that stretch reads TKPESYNVKL…MLHLLDQKMP (251 aa). The segment covering 112–127 has biased composition (basic and acidic residues); the sequence is QEKDTKNKEKAKKENK. Residues 112-140 form a disordered region; that stretch reads QEKDTKNKEKAKKENKPAPAPTSTEDKLK. Residues 290 to 310 form a helical membrane-spanning segment; that stretch reads VKQYAGFAIFIIALAAILFLY. Topologically, residues 311 to 324 are cytoplasmic; it reads TKKQTQPKAKKMQT. Residues 325-345 form a helical membrane-spanning segment; that stretch reads MLIFSSVYLVSLFMLFIILFL. At 346-349 the chain is on the extracellular side; it reads ETQN. The next 2 helical transmembrane spans lie at 350–370 and 371–391; these read IANI…KILL and NEKY…LTFQ. A topological domain (extracellular) is located at residue N392. Residues 393–413 traverse the membrane as a helical segment; sequence DATSGITIFILLSGATSVVML. Topologically, residues 414 to 421 are cytoplasmic; that stretch reads RDYSRRSA. The helical transmembrane segment at 422-442 threads the bilayer; the sequence is IMLSGFMVGLINMIYVLLLLL. Residues 443 to 457 lie on the Extracellular side of the membrane; the sequence is INNSTLLQVSTLMAL. The chain crosses the membrane as a helical span at residues 458-478; it reads GYAFLGGFGAFILGVGVIPLF. Residues 479–718 lie on the Cytoplasmic side of the membrane; sequence ETIFGLLTTS…QRIQYPDDKD (240 aa). The HD domain occupies 511-653; it reads TYHHSMMVAN…INISDSVEAA (143 aa). The Mn(2+) site is built by H514, H543, and D544. H514 lines the substrate pocket. Residues 544–547 and 555–556 contribute to the substrate site; these read DIGK and VE. Residues H580, H604, and H605 each contribute to the Mn(2+) site. The substrate site is built by Y631 and D648. D648 is a Mn(2+) binding site.

Belongs to the PgpH phosphodiesterase family. Mn(2+) is required as a cofactor.

It localises to the cell membrane. It carries out the reaction 3',3'-c-di-AMP + H2O = 5'-O-phosphonoadenylyl-(3'-&gt;5')-adenosine + H(+). C-di-AMP hydrolysis inhibited by ppGpp, without altering c-di-AMP binding. In terms of biological role, a phosphodiesterase (PDE) that hydrolyzes cyclic di-3',5'-adenylate (c-di-AMP); there are at least 2 PDEs for c-di-AMP in this bacteria (this and pdeA), this may be the major PDE for growth in liquid culture. During host infection c-di-AMP is secreted into the host cytoplasm which leads to interferon-beta production and secretion by the host. The cytoplasmic HD domain binds and hydrolyzes c-di-AMP to 5'-pApA; has very low activity against c-di-GMP, does not hydrolyze ppGpp. The sequence is that of Cyclic-di-AMP phosphodiesterase PgpH from Listeria monocytogenes serotype 1/2a (strain 10403S).